The sequence spans 35 residues: Mu-theraphotoxin-Hhn1a (35 aa).

Intrachain disulfides connect Cys-2–Cys-17, Cys-9–Cys-24, and Cys-16–Cys-31.

It belongs to the neurotoxin 10 (Hwtx-1) family. 22 (Htx-4) subfamily. Monomer. As to expression, expressed by the venom gland.

It is found in the secreted. Inhibits selectively tetrodotoxin-sensitive voltage-gated sodium channels (Nav). Does not act by binding to receptor site 3 to slow the inactivation kinetics of sodium currents. In Cyriopagopus hainanus (Chinese bird spider), this protein is Mu-theraphotoxin-Hhn1a.